The chain runs to 102 residues: Small ribosomal subunit protein uS10 (102 aa).

Belongs to the universal ribosomal protein uS10 family. In terms of assembly, part of the 30S ribosomal subunit.

Its function is as follows. Involved in the binding of tRNA to the ribosomes. The protein is Small ribosomal subunit protein uS10 of Leuconostoc citreum (strain KM20).